Here is a 692-residue protein sequence, read N- to C-terminus: DNA ligase (692 aa).

A compositionally biased stretch (polar residues) spans 1 to 14 (MQPDLFSTASQADA). The segment at 1–27 (MQPDLFSTASQADANATPEEPDASNPA) is disordered. Residues 54-58 (DAEYD), 103-104 (SL), and Glu-134 each bind NAD(+). The active-site N6-AMP-lysine intermediate is Lys-136. NAD(+)-binding residues include Arg-157, Glu-194, Lys-311, and Lys-335. Cys-429, Cys-432, Cys-447, and Cys-454 together coordinate Zn(2+). A BRCT domain is found at 612–692 (NKPKPFAGKT…ALLQLLDTHE (81 aa)).

This sequence belongs to the NAD-dependent DNA ligase family. LigA subfamily. It depends on Mg(2+) as a cofactor. Mn(2+) serves as cofactor.

It carries out the reaction NAD(+) + (deoxyribonucleotide)n-3'-hydroxyl + 5'-phospho-(deoxyribonucleotide)m = (deoxyribonucleotide)n+m + AMP + beta-nicotinamide D-nucleotide.. Its function is as follows. DNA ligase that catalyzes the formation of phosphodiester linkages between 5'-phosphoryl and 3'-hydroxyl groups in double-stranded DNA using NAD as a coenzyme and as the energy source for the reaction. It is essential for DNA replication and repair of damaged DNA. The chain is DNA ligase from Janthinobacterium sp. (strain Marseille) (Minibacterium massiliensis).